Reading from the N-terminus, the 228-residue chain is UPF0173 metal-dependent hydrolase Tpen_1493 (228 aa).

This sequence belongs to the UPF0173 family.

In Thermofilum pendens (strain DSM 2475 / Hrk 5), this protein is UPF0173 metal-dependent hydrolase Tpen_1493.